Consider the following 222-residue polypeptide: Cytochrome b6 (222 aa).

The helical transmembrane segment at 39 to 59 (IFYCLGGITLVCFLIQFATGF) threads the bilayer. Cysteine 42 contributes to the heme c binding site. Residues histidine 93 and histidine 107 each coordinate heme b. The next 3 helical transmembrane spans lie at 97-117 (ASMMVLMMILHTFRVYLTGGF), 123-143 (LTWVTGVVMAVITVSFGVTGY), and 193-213 (LHTFVLPWFIAVFMLLHFLMI). 2 residues coordinate heme b: histidine 194 and histidine 209.

The protein belongs to the cytochrome b family. PetB subfamily. In terms of assembly, the 4 large subunits of the cytochrome b6-f complex are cytochrome b6, subunit IV (17 kDa polypeptide, PetD), cytochrome f and the Rieske protein, while the 4 small subunits are PetG, PetL, PetM and PetN. The complex functions as a dimer. Heme b serves as cofactor. Requires heme c as cofactor.

It localises to the cellular thylakoid membrane. In terms of biological role, component of the cytochrome b6-f complex, which mediates electron transfer between photosystem II (PSII) and photosystem I (PSI), cyclic electron flow around PSI, and state transitions. This is Cytochrome b6 from Trichodesmium erythraeum (strain IMS101).